The chain runs to 193 residues: Outer membrane lipoprotein DolP (193 aa).

Residues 1-21 (MTLSPLKKLAILLGATIFLQG) form the signal peptide. Cys22 carries the N-palmitoyl cysteine lipid modification. Residue Cys22 is the site of S-diacylglycerol cysteine attachment. BON domains lie at 48-117 (DDET…TVSP) and 126-193 (KDSW…KYLD).

The protein belongs to the lipoprotein DolP family.

Its subcellular location is the cell outer membrane. Its function is as follows. Plays an important role in maintaining outer membrane integrity. This chain is Outer membrane lipoprotein DolP, found in Haemophilus influenzae (strain ATCC 51907 / DSM 11121 / KW20 / Rd).